We begin with the raw amino-acid sequence, 420 residues long: Sodium/proton antiporter 2 (420 aa).

Transmembrane regions (helical) follow at residues 25-45 (IALL…SVEI), 60-80 (IVFY…HQGF), 94-114 (ILLW…DNLT), 136-156 (LGAV…IGDV), 173-193 (IKNL…LMSL), 221-241 (LVFG…SLTG), 242-262 (LPPY…TDVI), 285-305 (GALF…AGIL), 321-341 (LIAS…LVAA), 363-383 (FCAG…VIFM), and 400-420 (FAFA…NFPL).

It belongs to the NhaD Na(+)/H(+) (TC 2.A.62) antiporter family.

It localises to the membrane. In terms of biological role, na(+)/H(+) antiporter that extrudes sodium in exchange for external protons. This Arabidopsis thaliana (Mouse-ear cress) protein is Sodium/proton antiporter 2.